The chain runs to 357 residues: Chorismate synthase (357 aa).

Positions 48 and 54 each coordinate NADP(+). Residues Arg-125 to Ser-127, Asn-243 to Ala-244, Gly-283, Lys-298 to Ser-302, and Arg-324 contribute to the FMN site.

This sequence belongs to the chorismate synthase family. As to quaternary structure, homotetramer. It depends on FMNH2 as a cofactor.

The enzyme catalyses 5-O-(1-carboxyvinyl)-3-phosphoshikimate = chorismate + phosphate. It functions in the pathway metabolic intermediate biosynthesis; chorismate biosynthesis; chorismate from D-erythrose 4-phosphate and phosphoenolpyruvate: step 7/7. In terms of biological role, catalyzes the anti-1,4-elimination of the C-3 phosphate and the C-6 proR hydrogen from 5-enolpyruvylshikimate-3-phosphate (EPSP) to yield chorismate, which is the branch point compound that serves as the starting substrate for the three terminal pathways of aromatic amino acid biosynthesis. This reaction introduces a second double bond into the aromatic ring system. This is Chorismate synthase from Pasteurella multocida (strain Pm70).